A 433-amino-acid polypeptide reads, in one-letter code: LanC-like protein GCL1 (433 aa).

Positions 1-22 (MSSSVDFVTEQGRCGDDGNGAG) are disordered.

This sequence belongs to the LanC-like protein family.

May play a role in signaling. May be not involved in abscisic acid (ABA) signaling. The protein is LanC-like protein GCL1 (GCL1) of Arabidopsis thaliana (Mouse-ear cress).